The chain runs to 440 residues: MESQQLSNYPNISHGSACASVTSKEVHTNQDPLDVSASKIQEYDKASTKANSQQTTTPASSAVPENLHHASPQPASVPPPQNGPYPQQCMMTQNQANPSGWSFYGHPSMIPYTPYQMSPMYFPPGPQSQFPQYPSSVGTPLSTPSPESGNTFTDSSSADSDMTSTKKYVRPPPMLTSPNDFPNWVKTYIKFLQNSNLGGIIPTVNGKPVRQITDDELTFLYNTFQIFAPSQFLPTWVKDILSVDYTDIMKILSKSIEKMQSDTQEANDIVTLANLQYNGSTPADAFETKVTNIIDRLNNNGIHINNKVACQLIMRGLSGEYKFLRYTRHRHLNMTVAELFLDIHAIYEEQQGSRNSKPNYRRNPSDEKNDSRSYTNTTKPKVIARNPQKTNNSKSKTARAHNVSTSNNSPSTDNDSISKSTTEPIQLNNKHDLHLRPETY.

3 stretches are compositionally biased toward polar residues: residues methionine 1 to serine 23, threonine 48 to serine 60, and glutamine 127 to phenylalanine 152. Disordered regions lie at residues methionine 1–glutamine 88, proline 126–proline 173, and glycine 352–tyrosine 440. The segment covering threonine 153–threonine 165 has biased composition (low complexity). Positions asparagine 299 to histidine 401 are RNA-binding. The segment covering asparagine 402 to serine 418 has biased composition (low complexity). At serine 416 the chain carries Phosphoserine. The segment covering lysine 419 to asparagine 428 has biased composition (polar residues). Residues asparagine 429 to tyrosine 440 are compositionally biased toward basic and acidic residues.

Homotrimer.

Its subcellular location is the cytoplasm. In terms of biological role, capsid protein (CA) is the structural component of the virus-like particle (VLP), forming the shell that encapsulates the retrotransposons dimeric RNA genome. The particles are assembled from trimer-clustered units and there are holes in the capsid shells that allow for the diffusion of macromolecules. CA also has nucleocapsid-like chaperone activity, promoting primer tRNA(i)-Met annealing to the multipartite primer-binding site (PBS), dimerization of Ty1 RNA and initiation of reverse transcription. This Saccharomyces cerevisiae (strain ATCC 204508 / S288c) (Baker's yeast) protein is Transposon Ty1-ML1 Gag polyprotein (TY1A-ML1).